Consider the following 563-residue polypeptide: Membrane protein insertase YidC (563 aa).

The helical transmembrane segment at Thr6 to His26 threads the bilayer. The segment at Pro36–Ala70 is disordered. Residues Ala54–Ala70 are compositionally biased toward low complexity. 4 consecutive transmembrane segments (helical) span residues Trp373 to Ala393, Leu443 to Val463, Pro482 to Pro502, and Val512 to Val532.

It belongs to the OXA1/ALB3/YidC family. Type 1 subfamily. Interacts with the Sec translocase complex via SecD. Specifically interacts with transmembrane segments of nascent integral membrane proteins during membrane integration.

It localises to the cell inner membrane. In terms of biological role, required for the insertion and/or proper folding and/or complex formation of integral membrane proteins into the membrane. Involved in integration of membrane proteins that insert both dependently and independently of the Sec translocase complex, as well as at least some lipoproteins. Aids folding of multispanning membrane proteins. This is Membrane protein insertase YidC from Bordetella parapertussis (strain 12822 / ATCC BAA-587 / NCTC 13253).